A 509-amino-acid chain; its full sequence is Probable cytochrome P450 4ac3 (509 aa).

Heme is bound at residue Cys-454.

This sequence belongs to the cytochrome P450 family. Requires heme as cofactor.

The protein resides in the endoplasmic reticulum membrane. The protein localises to the microsome membrane. Its function is as follows. May be involved in the metabolism of insect hormones and in the breakdown of synthetic insecticides. This Drosophila melanogaster (Fruit fly) protein is Probable cytochrome P450 4ac3 (Cyp4ac3).